The sequence spans 385 residues: 1-deoxy-D-xylulose 5-phosphate reductoisomerase (385 aa).

NADPH-binding residues include Thr11, Gly12, Ser13, Ile14, Ala37, Arg38, Asn39, and Asn123. 1-deoxy-D-xylulose 5-phosphate is bound at residue Lys124. An NADPH-binding site is contributed by Glu125. Asp149 serves as a coordination point for Mn(2+). Residues Ser150, Glu151, Ser173, and His196 each coordinate 1-deoxy-D-xylulose 5-phosphate. Glu151 lines the Mn(2+) pocket. Gly202 contacts NADPH. 1-deoxy-D-xylulose 5-phosphate-binding residues include Ser209, Asn214, Lys215, and Glu218. Position 218 (Glu218) interacts with Mn(2+).

Belongs to the DXR family. Requires Mg(2+) as cofactor. Mn(2+) serves as cofactor.

The catalysed reaction is 2-C-methyl-D-erythritol 4-phosphate + NADP(+) = 1-deoxy-D-xylulose 5-phosphate + NADPH + H(+). The protein operates within isoprenoid biosynthesis; isopentenyl diphosphate biosynthesis via DXP pathway; isopentenyl diphosphate from 1-deoxy-D-xylulose 5-phosphate: step 1/6. Catalyzes the NADPH-dependent rearrangement and reduction of 1-deoxy-D-xylulose-5-phosphate (DXP) to 2-C-methyl-D-erythritol 4-phosphate (MEP). The sequence is that of 1-deoxy-D-xylulose 5-phosphate reductoisomerase from Moorella thermoacetica (strain ATCC 39073 / JCM 9320).